A 305-amino-acid chain; its full sequence is Tyrosine recombinase XerC (305 aa).

The Core-binding (CB) domain occupies 1–94; the sequence is MSSVDEFLTY…ACRSYYAWLL (94 aa). Residues 115 to 292 form the Tyr recombinase domain; the sequence is KLPQVLDADE…DFQHLAKVYD (178 aa). Residues arginine 154, lysine 178, histidine 244, arginine 247, and histidine 270 contribute to the active site. The active-site O-(3'-phospho-DNA)-tyrosine intermediate is the tyrosine 279.

This sequence belongs to the 'phage' integrase family. XerC subfamily. In terms of assembly, forms a cyclic heterotetrameric complex composed of two molecules of XerC and two molecules of XerD.

It localises to the cytoplasm. Its function is as follows. Site-specific tyrosine recombinase, which acts by catalyzing the cutting and rejoining of the recombining DNA molecules. The XerC-XerD complex is essential to convert dimers of the bacterial chromosome into monomers to permit their segregation at cell division. It also contributes to the segregational stability of plasmids. This is Tyrosine recombinase XerC from Xanthomonas axonopodis pv. citri (strain 306).